The primary structure comprises 308 residues: Acetyl-coenzyme A carboxylase carboxyl transferase subunit beta (308 aa).

Positions 25-294 (VWTKCTSCEQ…PLVVSVNDSP (270 aa)) constitute a CoA carboxyltransferase N-terminal domain. The Zn(2+) site is built by Cys29, Cys32, Cys48, and Cys51. The C4-type zinc finger occupies 29–51 (CTSCEQVLYHAELERNLEVCPKC).

It belongs to the AccD/PCCB family. In terms of assembly, acetyl-CoA carboxylase is a heterohexamer composed of biotin carboxyl carrier protein (AccB), biotin carboxylase (AccC) and two subunits each of ACCase subunit alpha (AccA) and ACCase subunit beta (AccD). Requires Zn(2+) as cofactor.

It is found in the cytoplasm. It catalyses the reaction N(6)-carboxybiotinyl-L-lysyl-[protein] + acetyl-CoA = N(6)-biotinyl-L-lysyl-[protein] + malonyl-CoA. It participates in lipid metabolism; malonyl-CoA biosynthesis; malonyl-CoA from acetyl-CoA: step 1/1. Component of the acetyl coenzyme A carboxylase (ACC) complex. Biotin carboxylase (BC) catalyzes the carboxylation of biotin on its carrier protein (BCCP) and then the CO(2) group is transferred by the transcarboxylase to acetyl-CoA to form malonyl-CoA. This Vibrio vulnificus (strain CMCP6) protein is Acetyl-coenzyme A carboxylase carboxyl transferase subunit beta.